The chain runs to 220 residues: MSAISRSALAVDFVGGAVGYKLRSGAARSHALLKATGVSANRPLHVIDATAGLGRDSFLLASMGATVTLIERSPQVHALLAQGLEAARAESDEIAAIVARMTLIHGDARALLPTLQADVVTVDPMHPARTKTALVKQEMRLLREMVGADPDVADLMQAALVARCGRVVLKWPLRAEPLAGIRKPSYQIAGKTVRYDVFVNPRAPAEEALPRADDLALFRF.

S-adenosyl-L-methionine contacts are provided by residues 55–56 (RD), 71–72 (ER), and Asp-123.

Belongs to the methyltransferase superfamily. RsmJ family.

The protein resides in the cytoplasm. It carries out the reaction guanosine(1516) in 16S rRNA + S-adenosyl-L-methionine = N(2)-methylguanosine(1516) in 16S rRNA + S-adenosyl-L-homocysteine + H(+). Specifically methylates the guanosine in position 1516 of 16S rRNA. This is Ribosomal RNA small subunit methyltransferase J from Rhodopseudomonas palustris (strain BisB5).